The following is a 257-amino-acid chain: Glutamate racemase (257 aa).

Residues 12–13 and 44–45 each bind substrate; these read DS and YG. Residue cysteine 75 is the Proton donor/acceptor of the active site. 76-77 is a substrate binding site; sequence NT. Cysteine 185 (proton donor/acceptor) is an active-site residue. Residue 186 to 187 participates in substrate binding; that stretch reads TH.

Belongs to the aspartate/glutamate racemases family.

The enzyme catalyses L-glutamate = D-glutamate. Its pathway is cell wall biogenesis; peptidoglycan biosynthesis. Functionally, provides the (R)-glutamate required for cell wall biosynthesis. The protein is Glutamate racemase of Clostridium botulinum (strain Loch Maree / Type A3).